Consider the following 445-residue polypeptide: Tubulin beta-2A chain (445 aa).

Residues 1–4 carry the MREI motif motif; that stretch reads MREI. Gln-11 serves as a coordination point for GTP. At Ser-40 the chain carries Phosphoserine. Lys-58 carries the post-translational modification N6-acetyllysine; alternate. Lys-58 carries the post-translational modification N6-succinyllysine; alternate. A Glycyl lysine isopeptide (Lys-Gly) (interchain with G-Cter in ubiquitin); alternate cross-link involves residue Lys-58. GTP contacts are provided by Glu-69, Ser-138, Gly-142, Thr-143, and Gly-144. Position 69 (Glu-69) interacts with Mg(2+). A Phosphoserine; by CDK1 modification is found at Ser-172. Residues Asn-204 and Asn-226 each contribute to the GTP site. A phosphothreonine mark is found at Thr-285 and Thr-290. Position 318 is an omega-N-methylarginine (Arg-318). Lys-324 participates in a covalent cross-link: Glycyl lysine isopeptide (Lys-Gly) (interchain with G-Cter in ubiquitin). The disordered stretch occupies residues 422–445; that stretch reads YQQYQDATADEQGEFEEEEGEDEA. Positions 429-445 are enriched in acidic residues; it reads TADEQGEFEEEEGEDEA. 5-glutamyl polyglutamate is present on Glu-438.

It belongs to the tubulin family. In terms of assembly, interacts with ZNRF1. Part of a complex composed at least of ASH2L, EMSY, HCFC1, HSPA8, CCAR2, MATR3, MKI67, RBBP5, TUBB2A, WDR5 and ZNF335; this complex may have a histone H3-specific methyltransferase activity. Dimer of alpha and beta chains. A typical microtubule is a hollow water-filled tube with an outer diameter of 25 nm and an inner diameter of 15 nM. Alpha-beta heterodimers associate head-to-tail to form protofilaments running lengthwise along the microtubule wall with the beta-tubulin subunit facing the microtubule plus end conferring a structural polarity. Microtubules usually have 13 protofilaments but different protofilament numbers can be found in some organisms and specialized cells. It depends on Mg(2+) as a cofactor. Some glutamate residues at the C-terminus are polyglutamylated, resulting in polyglutamate chains on the gamma-carboxyl group. Polyglutamylation plays a key role in microtubule severing by spastin (SPAST). SPAST preferentially recognizes and acts on microtubules decorated with short polyglutamate tails: severing activity by SPAST increases as the number of glutamates per tubulin rises from one to eight, but decreases beyond this glutamylation threshold. Glutamylation is also involved in cilia motility. Post-translationally, some glutamate residues at the C-terminus are monoglycylated but not polyglycylated due to the absence of functional TTLL10 in human. Monoglycylation is mainly limited to tubulin incorporated into cilia and flagella axonemes, which is required for their stability and maintenance. Flagella glycylation controls sperm motility. Both polyglutamylation and monoglycylation can coexist on the same protein on adjacent residues, and lowering glycylation levels increases polyglutamylation, and reciprocally. In terms of processing, phosphorylated on Ser-172 by CDK1 during the cell cycle, from metaphase to telophase, but not in interphase. This phosphorylation inhibits tubulin incorporation into microtubules. In terms of tissue distribution, high expression in brain, where it represents 30% of all beta-tubulins.

It is found in the cytoplasm. It localises to the cytoskeleton. Tubulin is the major constituent of microtubules, a cylinder consisting of laterally associated linear protofilaments composed of alpha- and beta-tubulin heterodimers. Microtubules grow by the addition of GTP-tubulin dimers to the microtubule end, where a stabilizing cap forms. Below the cap, tubulin dimers are in GDP-bound state, owing to GTPase activity of alpha-tubulin. This Homo sapiens (Human) protein is Tubulin beta-2A chain (TUBB2A).